The following is a 630-amino-acid chain: Transposase B from transposon PsiTn554 (630 aa).

The 87-residue stretch at 216–302 (TYFKQLVKRY…ILEGLFSTLH (87 aa)) folds into the Core-binding (CB) domain. Residues 326–513 (AKPRFIDEFV…FDETLKNEFT (188 aa)) form the Tyr recombinase domain. Active-site residues include Arg363, Lys391, His465, Arg468, and His491. The active-site O-(3'-phospho-DNA)-tyrosine intermediate is the Tyr500.

Belongs to the 'phage' integrase family.

The sequence is that of Transposase B from transposon PsiTn554 (tnpB) from Staphylococcus aureus.